Consider the following 473-residue polypeptide: Trehalose-6-phosphate synthase (473 aa).

Arg-10 is a D-glucose 6-phosphate binding site. Residue 21 to 22 (GG) coordinates UDP-alpha-D-glucose. Tyr-76 and Asp-130 together coordinate D-glucose 6-phosphate. UDP-alpha-D-glucose-binding residues include Arg-262 and Lys-267. Residue Arg-300 coordinates D-glucose 6-phosphate. Residues Phe-339 and 365–369 (LVAKE) each bind UDP-alpha-D-glucose.

This sequence belongs to the glycosyltransferase 20 family. In terms of assembly, homotetramer.

It carries out the reaction D-glucose 6-phosphate + UDP-alpha-D-glucose = alpha,alpha-trehalose 6-phosphate + UDP + H(+). The protein operates within glycan biosynthesis; trehalose biosynthesis. Probably involved in the osmoprotection via the biosynthesis of trehalose. Catalyzes the transfer of glucose from UDP-alpha-D-glucose (UDP-Glc) to D-glucose 6-phosphate (Glc-6-P) to form trehalose-6-phosphate. Acts with retention of the anomeric configuration of the UDP-sugar donor. This chain is Trehalose-6-phosphate synthase (otsA), found in Salmonella arizonae (strain ATCC BAA-731 / CDC346-86 / RSK2980).